The primary structure comprises 608 residues: UvrABC system protein C (608 aa).

Residues 15–93 (HQPGVYRMYN…IKQYLPKYNV (79 aa)) enclose the GIY-YIG domain. In terms of domain architecture, UVR spans 203-238 (RQVIQTLVKQMESASQSLNFEKAAIIRDQIQAMRRV).

It belongs to the UvrC family. In terms of assembly, interacts with UvrB in an incision complex.

It is found in the cytoplasm. The UvrABC repair system catalyzes the recognition and processing of DNA lesions. UvrC both incises the 5' and 3' sides of the lesion. The N-terminal half is responsible for the 3' incision and the C-terminal half is responsible for the 5' incision. The chain is UvrABC system protein C from Aliivibrio fischeri (strain ATCC 700601 / ES114) (Vibrio fischeri).